A 1385-amino-acid polypeptide reads, in one-letter code: DNA-directed RNA polymerase subunit beta'' (1385 aa).

Residues cysteine 224, cysteine 294, cysteine 301, and cysteine 304 each coordinate Zn(2+).

Belongs to the RNA polymerase beta' chain family. RpoC2 subfamily. In terms of assembly, in plastids the minimal PEP RNA polymerase catalytic core is composed of four subunits: alpha, beta, beta', and beta''. When a (nuclear-encoded) sigma factor is associated with the core the holoenzyme is formed, which can initiate transcription. Requires Zn(2+) as cofactor.

The protein localises to the plastid. It localises to the chloroplast. It carries out the reaction RNA(n) + a ribonucleoside 5'-triphosphate = RNA(n+1) + diphosphate. In terms of biological role, DNA-dependent RNA polymerase catalyzes the transcription of DNA into RNA using the four ribonucleoside triphosphates as substrates. The chain is DNA-directed RNA polymerase subunit beta'' from Illicium oligandrum (Star anise).